We begin with the raw amino-acid sequence, 1019 residues long: Collagen alpha-2(VI) chain (1019 aa).

A signal peptide spans 1-20 (MLQGTCSVLLLWGILGAIQA). The segment at 21–256 (QQQEVISPDT…YKVSCLEIPG (236 aa)) is nonhelical region. Residues 46-234 (HVYFVLDTSE…EIDQDTINRI (189 aa)) form the VWFA 1 domain. N-linked (GlcNAc...) asparagine glycosylation is present at Asn-140. The disordered stretch occupies residues 257-588 (PSGPKGYRGQ…GEPGPPGDPG (332 aa)). The tract at residues 257 to 590 (PSGPKGYRGQ…PGPPGDPGLT (334 aa)) is triple-helical region. The span at 287–305 (DPGIEGPIGFPGPKGVPGF) shows a compositional bias: low complexity. Residues 306–318 (KGEKGEFGADGRK) are compositionally biased toward basic and acidic residues. N-linked (GlcNAc...) asparagine glycosylation is present at Asn-327. Basic and acidic residues-rich tracts occupy residues 365 to 377 (ERGD…DPGR) and 419 to 429 (PKGEPGRRGDP). 5 consecutive short sequence motifs (cell attachment site) follow at residues 366–368 (RGD), 426–428 (RGD), 489–491 (RGD), 498–500 (RGD), and 539–541 (RGD). Basic and acidic residues predominate over residues 524 to 557 (PGEKGEPGPRGPEGGRGDFGLKGEPGRKGEKGEP). Residues 559–569 (DPGPPGEPGPR) are compositionally biased toward pro residues. The tract at residues 591–1019 (ECDVMTYVRE…FFDRFIRWIC (429 aa)) is nonhelical region. VWFA domains follow at residues 615–805 (DVVF…EDVL) and 833–1014 (DIVF…FDRF). An N-linked (GlcNAc...) asparagine glycan is attached at Asn-630. Phosphothreonine is present on Thr-701. Ser-705 carries the post-translational modification Phosphoserine. N-linked (GlcNAc...) asparagine glycosylation is found at Asn-785, Asn-897, and Asn-954.

Belongs to the type VI collagen family. Trimers composed of three different chains: alpha-1(VI), alpha-2(VI), and alpha-3(VI) or alpha-5(VI) or alpha-6(VI). Interacts with CSPG4. In terms of processing, prolines at the third position of the tripeptide repeating unit (G-X-Y) are hydroxylated in some or all of the chains.

It is found in the secreted. Its subcellular location is the extracellular space. It localises to the extracellular matrix. The protein localises to the membrane. Collagen VI acts as a cell-binding protein. The protein is Collagen alpha-2(VI) chain (COL6A2) of Homo sapiens (Human).